Consider the following 687-residue polypeptide: Protein white (687 aa).

The interval 1–30 is disordered; that stretch reads MGQEDQELLIRGGSKHPSAEHLNNGDSGAA. The Cytoplasmic segment spans residues 1–419; it reads MGQEDQELLI…FMQFRAVLWR (419 aa). The ABC transporter domain occupies 93–341; sequence NRTRGLFCNE…FSYVGAQCPT (249 aa). ATP is bound at residue 130 to 137; it reads GSSGAGKT. Residues 420–440 traverse the membrane as a helical segment; sequence SWLSVLKEPLLVKVRLIQTTM. Residues 441–460 lie on the Extracellular side of the membrane; sequence VAILIGLIFLGQQLTQVGVM. The helical transmembrane segment at 461–481 threads the bilayer; sequence NINGAIFLFLTNMTFQNVFAT. Topologically, residues 482–497 are cytoplasmic; the sequence is INVFTSELPVFMREAR. The chain crosses the membrane as a helical span at residues 498 to 518; the sequence is SRLYRCDTYFLGKTIAELPLF. At 519–531 the chain is on the extracellular side; the sequence is LTVPLVFTAIAYP. A helical transmembrane segment spans residues 532 to 552; sequence MIGLRAGVLHFFNCLALVTLV. Residues 553 to 568 are Cytoplasmic-facing; it reads ANVSTSFGYLISCASS. A helical transmembrane segment spans residues 569 to 589; sequence STSMALSVGPPVIIPFLLFGG. Topologically, residues 590–644 are extracellular; sequence FFLNSGSVPVYLKWLSYLSWFRYANEGLLINQWADVEPGEISCTSSNTTCPSSGK. A glycan (N-linked (GlcNAc...) asparagine) is linked at Asn636. A helical membrane pass occupies residues 645–665; sequence VILETLNFSAADLPLDYVGLA. Over 666–675 the chain is Cytoplasmic; that stretch reads ILIVSFRVLA.

It belongs to the ABC transporter superfamily. ABCG family. Eye pigment precursor importer (TC 3.A.1.204) subfamily. In terms of assembly, may form a heterodimer with bw/brown. May form a heterodimer with st/scarlet. In terms of tissue distribution, expressed in the head (at protein level). Expressed in the eye, specifically in retina primary pigment cells, in the basement membrane of the base of secondary and tertiary pigment cells, and in retinula cells (at protein level). Expressed in the retina underlying lamina in the epithelial glia that surrounds the array of lamina cartridges (at protein level). Weakly expressed in photoreceptors, specifically in terminals of R1-R6, R7 and R8 (at protein level). Expressed at very low levels in medulla and central brain (at protein level). Expressed in principal cells of the Malpighian tubules.

It localises to the cytoplasmic vesicle membrane. The enzyme catalyses 3',5'-cyclic GMP(in) + ATP + H2O = 3',5'-cyclic GMP(out) + ADP + phosphate + H(+). It catalyses the reaction guanine(out) + ATP + H2O = guanine(in) + ADP + phosphate + H(+). It carries out the reaction riboflavin(in) + ATP + H2O = riboflavin(out) + ADP + phosphate + H(+). The catalysed reaction is (6S)-5,6,7,8-tetrahydrofolate(out) + ATP + H2O = (6S)-5,6,7,8-tetrahydrofolate(in) + ADP + phosphate + H(+). The enzyme catalyses L-tryptophan(out) + ATP + H2O = L-tryptophan(in) + ADP + phosphate + H(+). It catalyses the reaction L-kynurenine(out) + ATP + H2O = L-kynurenine(in) + ADP + phosphate + H(+). It carries out the reaction xanthine(out) + ATP + H2O = xanthine(in) + ADP + phosphate + H(+). Functionally, ATP-dependent transporter of the ATP-binding cassette (ABC) family which transports various molecules including bioamines, neurotransmitters, metabolic intermediates and second messengers. In the eye, required for the transport of the eye red and brown pigment precursors, guanine and tryptophan, into pigment cell granules. Probably in association with bw/brown, involved in the transport of guanine. Probably in association with st/scarlet involved in the transport of kynurenine and probably tryptophan. Involved in the transport of kynurenine in pupal eyes. May play a role in histamine uptake by the lamina epithelial glia which surrounds photoreceptors R1-R6. In Malpighian tubules, involved in the transport of cGMP, guanine, xanthine, riboflavin, kynurenine and tryptophan. Probably in association with br/brown, involved in aging-induced intestinal stem cell proliferation in the midgut by regulating tetrahydrofolate transport. Probably in association with st/scarlet, plays a role in zinc storage granule biogenesis in Malpighian tubule principal epithelial cells. This chain is Protein white, found in Drosophila melanogaster (Fruit fly).